Consider the following 106-residue polypeptide: Urease subunit beta (106 aa).

This sequence belongs to the urease beta subunit family. As to quaternary structure, heterotrimer of UreA (gamma), UreB (beta) and UreC (alpha) subunits. Three heterotrimers associate to form the active enzyme.

Its subcellular location is the cytoplasm. It carries out the reaction urea + 2 H2O + H(+) = hydrogencarbonate + 2 NH4(+). It participates in nitrogen metabolism; urea degradation; CO(2) and NH(3) from urea (urease route): step 1/1. This chain is Urease subunit beta, found in Acinetobacter baumannii (strain ATCC 17978 / DSM 105126 / CIP 53.77 / LMG 1025 / NCDC KC755 / 5377).